We begin with the raw amino-acid sequence, 206 residues long: Large ribosomal subunit protein uL4 (206 aa).

The tract at residues 43–94 (ARSGNRAQKDREQVKHTTKKPWRQKGTGRARAGMSSSPLWRGGGRIFPNSPE) is disordered. Positions 58-70 (HTTKKPWRQKGTG) are enriched in basic residues.

It belongs to the universal ribosomal protein uL4 family. As to quaternary structure, part of the 50S ribosomal subunit.

Functionally, one of the primary rRNA binding proteins, this protein initially binds near the 5'-end of the 23S rRNA. It is important during the early stages of 50S assembly. It makes multiple contacts with different domains of the 23S rRNA in the assembled 50S subunit and ribosome. Its function is as follows. Forms part of the polypeptide exit tunnel. The chain is Large ribosomal subunit protein uL4 from Polynucleobacter asymbioticus (strain DSM 18221 / CIP 109841 / QLW-P1DMWA-1) (Polynucleobacter necessarius subsp. asymbioticus).